The primary structure comprises 117 residues: Ig heavy chain V region UPC10 (117 aa).

Residues 1-116 enclose the Ig-like domain; that stretch reads EVKLLESGGG…WGQVTTLTVS (116 aa).

The polypeptide is Ig heavy chain V region UPC10 (Mus musculus (Mouse)).